The primary structure comprises 314 residues: Methionyl-tRNA formyltransferase (314 aa).

Position 109–112 (Ser-109–Pro-112) interacts with (6S)-5,6,7,8-tetrahydrofolate.

This sequence belongs to the Fmt family.

It catalyses the reaction L-methionyl-tRNA(fMet) + (6R)-10-formyltetrahydrofolate = N-formyl-L-methionyl-tRNA(fMet) + (6S)-5,6,7,8-tetrahydrofolate + H(+). In terms of biological role, attaches a formyl group to the free amino group of methionyl-tRNA(fMet). The formyl group appears to play a dual role in the initiator identity of N-formylmethionyl-tRNA by promoting its recognition by IF2 and preventing the misappropriation of this tRNA by the elongation apparatus. The sequence is that of Methionyl-tRNA formyltransferase from Dictyoglomus turgidum (strain DSM 6724 / Z-1310).